The sequence spans 421 residues: Replication-associated recombination protein A (421 aa).

Position 45 to 52 (45 to 52) interacts with ATP; sequence GPPGIGKT.

It belongs to the AAA ATPase family. RarA/MGS1/WRNIP1 subfamily. As to quaternary structure, homotetramer. Interacts with single-stranded binding protein SsbA. May interact with PriA.

It is found in the cytoplasm. It localises to the nucleoid. SsDNA-dependent ATP hydrolysis is stimulated by single-stranded binding protein SsbA but not by SsbB; in the presence of SsbB, ssDNA secondary structure is removed and RarA's ATPase activity is decreased. The C-terminal 9 residues of SsbA are sufficient to stimulate ATPase activity. In terms of biological role, plays a role in recombination-dependent DNA replication. Positively affects the formation of RecA threads during response to DNA damage, directly or indirectly counteracting the negative RecA modulators RecX and RecU. Stabilizes a RecA-ssDNA complex. In vitro, in the presence of SsbA, inhibits PriA-dependent DNA replication restart of both leading and lagging strands; elongation is insensitive to RarA. Plays a role in response to DNA damage, localizes to the replication fork but also to DNA elsewhere in the cell. Probably required for repair of single-stranded nicks generated by H(2)O(2). Epistatic to RecA, partially represses deletions of the error-prone translesion DNA polymerases (dinB1 and dinB2), genetically interacts with replicative helicase loaders dnaB and dnaD. Epistatic to recF and recO mutations upon DNA damage. A DNA-dependent ATPase stimulated by hairpin structures in circular single-stranded (ss)DNA or ssDNA-dsDNA junctions, by blunt end and 5'-tailed dsDNA and by single-stranded binding protein SsbA protein bound to ssDNA. Preferentially binds ssDNA and replication-fork structures; SsbA stimulates binding to ssDNA. Addition of ATP to the protein has no visible effect in vitro. This is Replication-associated recombination protein A from Bacillus subtilis (strain 168).